The chain runs to 310 residues: AMMECR1-like protein (310 aa).

The disordered stretch occupies residues 26–95; sequence LSGSGTHSHG…LSPLPRPNGT (70 aa). The span at 28-66 shows a compositional bias: polar residues; sequence GSGTHSHGNQSTTVPGSSSGPLQNHQHVDSSSGRENVSD. At Ser74 the chain carries Phosphoserine. The region spanning 97-291 is the AMMECR1 domain; it reads NTTKNLVVTA…ISYAEYIASR (195 aa).

The sequence is that of AMMECR1-like protein (AMMECR1L) from Homo sapiens (Human).